A 596-amino-acid polypeptide reads, in one-letter code: UDP-glucuronate:xylan alpha-glucuronosyltransferase 2 (596 aa).

Residues 17 to 37 traverse the membrane as a helical; Signal-anchor for type II membrane protein segment; sequence LIRFNLVLLGFSFLLYTAIFF. Residues aspartate 395 and aspartate 397 each contribute to the Mn(2+) site. Substrate-binding positions include 395–397, 424–426, 451–455, and 504–509; these read DAD, NSG, NGGDQ, and HYLGWK. Histidine 504 is a binding site for Mn(2+).

This sequence belongs to the glycosyltransferase 8 family. Glycogenin subfamily. Mn(2+) serves as cofactor.

Its subcellular location is the golgi apparatus membrane. Glycosyltransferase required for the addition of both glucuronic acid and 4-O-methylglucuronic acid branches to xylan in stem cell walls. In association with GUX1, is responsible for almost all of the substitutions of the xylan backbone in stem glucuronoxylan. In Arabidopsis thaliana (Mouse-ear cress), this protein is UDP-glucuronate:xylan alpha-glucuronosyltransferase 2 (GUX2).